The sequence spans 103 residues: uncharacterized protein (103 aa).

This is an uncharacterized protein from Escherichia coli (strain UTI89 / UPEC).